The following is a 104-amino-acid chain: Viral histone-like protein (104 aa).

It belongs to the bacterial histone-like protein family. In terms of assembly, homodimer.

The protein localises to the virion. Its activity is regulated as follows. Stilbene derivatives SD1 and SD4 disrupt the binding between pA104R and DNA and inhibit the viral replication in primary alveolar macrophages. Functionally, DNA-binding protein that plays a critical role in nucleoid compaction, genome replication and DNA replication and transcription. Binds to both ssDNA and dsDNA with a binding site covering about 15 nucleotides. Displays DNA-supercoiling activity only when associated with the viral DNA topoisomerase 2. The sequence is that of Viral histone-like protein from African swine fever virus (strain Badajoz 1971 Vero-adapted) (Ba71V).